Here is a 397-residue protein sequence, read N- to C-terminus: Elongation factor Tu 1 (397 aa).

The 197-residue stretch at 10–206 (KPHVNIGTIG…AIDTWIPEPV (197 aa)) folds into the tr-type G domain. The G1 stretch occupies residues 19–26 (GHVDHGKT). GTP is bound at residue 19-26 (GHVDHGKT). T26 contacts Mg(2+). Residues 61–65 (GITIS) are G2. The segment at 82–85 (DCPG) is G3. Residues 82–86 (DCPGH) and 137–140 (NKCD) contribute to the GTP site. Residues 137-140 (NKCD) are G4. Residues 175 to 177 (SAL) are G5.

It belongs to the TRAFAC class translation factor GTPase superfamily. Classic translation factor GTPase family. EF-Tu/EF-1A subfamily. In terms of assembly, monomer.

It localises to the cytoplasm. It catalyses the reaction GTP + H2O = GDP + phosphate + H(+). Its function is as follows. GTP hydrolase that promotes the GTP-dependent binding of aminoacyl-tRNA to the A-site of ribosomes during protein biosynthesis. In Alkaliphilus metalliredigens (strain QYMF), this protein is Elongation factor Tu 1.